The primary structure comprises 381 residues: Chaperone protein DnaJ (381 aa).

The region spanning 3-66 (DYYETLGVER…DKRRMYDSGV (64 aa)) is the J domain. A CR-type zinc finger spans residues 129–211 (GGTAHVKINT…CMGHGRVRTT (83 aa)). Zn(2+) is bound by residues Cys142, Cys145, Cys159, Cys162, Cys185, Cys188, Cys199, and Cys202. 4 CXXCXGXG motif repeats span residues 142 to 149 (CQECGGSG), 159 to 166 (CPDCHGQG), 185 to 192 (CERCEGHG), and 199 to 206 (CPSCMGHG). Residues 355–381 (ATHVSQASRPQAGQKKGFFSKLKDALS) form a disordered region. Over residues 356–365 (THVSQASRPQ) the composition is skewed to polar residues.

This sequence belongs to the DnaJ family. In terms of assembly, homodimer. Zn(2+) is required as a cofactor.

It localises to the cytoplasm. In terms of biological role, participates actively in the response to hyperosmotic and heat shock by preventing the aggregation of stress-denatured proteins and by disaggregating proteins, also in an autonomous, DnaK-independent fashion. Unfolded proteins bind initially to DnaJ; upon interaction with the DnaJ-bound protein, DnaK hydrolyzes its bound ATP, resulting in the formation of a stable complex. GrpE releases ADP from DnaK; ATP binding to DnaK triggers the release of the substrate protein, thus completing the reaction cycle. Several rounds of ATP-dependent interactions between DnaJ, DnaK and GrpE are required for fully efficient folding. Also involved, together with DnaK and GrpE, in the DNA replication of plasmids through activation of initiation proteins. The chain is Chaperone protein DnaJ from Bifidobacterium longum (strain NCC 2705).